The primary structure comprises 346 residues: Ion-translocating oxidoreductase complex subunit D (346 aa).

The next 4 membrane-spanning stretches (helical) occupy residues 20–40, 42–62, 69–91, and 120–140; these read IMIQ…TFFG, GIII…GVVL, LASR…SLPP, and PFNP…VQMT. T187 is modified (FMN phosphoryl threonine). 5 helical membrane-spanning segments follow: residues 212-232, 242-262, 264-284, 290-310, and 314-334; these read ASAG…YLIW, LSLL…APVV, APPL…FIAT, AATV…VWLI, and GGYP…VPLI.

It belongs to the NqrB/RnfD family. As to quaternary structure, the complex is composed of six subunits: RnfA, RnfB, RnfC, RnfD, RnfE and RnfG. Requires FMN as cofactor.

It localises to the cell inner membrane. Part of a membrane-bound complex that couples electron transfer with translocation of ions across the membrane. The polypeptide is Ion-translocating oxidoreductase complex subunit D (Sodalis glossinidius (strain morsitans)).